Consider the following 108-residue polypeptide: Nucleoid-associated protein BH02310 (108 aa).

This sequence belongs to the YbaB/EbfC family. As to quaternary structure, homodimer.

The protein localises to the cytoplasm. It is found in the nucleoid. In terms of biological role, binds to DNA and alters its conformation. May be involved in regulation of gene expression, nucleoid organization and DNA protection. The sequence is that of Nucleoid-associated protein BH02310 from Bartonella henselae (strain ATCC 49882 / DSM 28221 / CCUG 30454 / Houston 1) (Rochalimaea henselae).